Here is a 364-residue protein sequence, read N- to C-terminus: Probable cysteine protease RDL4 (364 aa).

The first 23 residues, 1-23 (MGSAKSAMLILLVAMVIASCATA), serve as a signal peptide directing secretion. The propeptide at 24-136 (IDMSVVSYDD…DRYKTSADDV (113 aa)) is activation peptide. Asn-87 is a glycosylation site (N-linked (GlcNAc...) asparagine). Cystine bridges form between Cys-158/Cys-199, Cys-192/Cys-232, and Cys-291/Cys-342. The active site involves Cys-161. Catalysis depends on residues His-297 and Asn-317.

Belongs to the peptidase C1 family. As to expression, expressed in inflorescences.

Probable thiol protease. The chain is Probable cysteine protease RDL4 from Arabidopsis thaliana (Mouse-ear cress).